We begin with the raw amino-acid sequence, 101 residues long: UPF0235 protein SG2030 (101 aa).

This sequence belongs to the UPF0235 family.

This chain is UPF0235 protein SG2030, found in Sodalis glossinidius (strain morsitans).